The following is a 113-amino-acid chain: MELPANVQNQIMQFQQLQQQLQMIMYQKQQFETQLKEMEKAIEEMEKSGSEEVFKMAGGILIKRNKAEVKEELSERVETLQLRVTTFEKQEEKMQKRYTELQENLQKAMGQGQ.

Belongs to the prefoldin subunit beta family. As to quaternary structure, heterohexamer of two alpha and four beta subunits.

The protein localises to the cytoplasm. Molecular chaperone capable of stabilizing a range of proteins. Seems to fulfill an ATP-independent, HSP70-like function in archaeal de novo protein folding. This Methanococcus maripaludis (strain C6 / ATCC BAA-1332) protein is Prefoldin subunit beta.